A 306-amino-acid polypeptide reads, in one-letter code: Palmitoyl-protein thioesterase 1 (306 aa).

The first 27 residues, 1 to 27, serve as a signal peptide directing secretion; the sequence is MASPSCLWLLAVALLPWTCAARALHHL. Cystine bridges form between cysteine 45/cysteine 46, cysteine 96/cysteine 128, and cysteine 152/cysteine 160. Residue serine 115 is part of the active site. 3 N-linked (GlcNAc...) asparagine glycosylation sites follow: asparagine 197, asparagine 212, and asparagine 232. Active-site residues include aspartate 233 and histidine 289.

This sequence belongs to the palmitoyl-protein thioesterase family. In terms of assembly, interacts with CLN5, ATP5F1A and ATP5F1B. Glycosylated.

The protein localises to the lysosome. It localises to the secreted. The protein resides in the golgi apparatus. It is found in the endoplasmic reticulum. It catalyses the reaction S-hexadecanoyl-L-cysteinyl-[protein] + H2O = L-cysteinyl-[protein] + hexadecanoate + H(+). It carries out the reaction hexadecanoyl-CoA + H2O = hexadecanoate + CoA + H(+). The catalysed reaction is S-hexadecanoyl-N-acetylcysteamine + H2O = N-acetylcysteamine + hexadecanoate + H(+). The enzyme catalyses S-hexadecanoyl-N-acetylcysteine methyl ester + H2O = N-acetylcysteine methyl ester + hexadecanoate + H(+). Its activity is regulated as follows. Palmitoylation reduces PPT1 enzymatic activity. In terms of biological role, has thioesterase activity against fatty acid thioesters with 14 -18 carbons, including palmitoyl-CoA, S-palmitoyl-N-acetylcysteamine, and palmitoylated proteins. In contrast to PPT2, PPT1 can hydrolyze palmitoylated proteins and palmitoylcysteine. In Macaca fascicularis (Crab-eating macaque), this protein is Palmitoyl-protein thioesterase 1 (PPT1).